The following is a 261-amino-acid chain: MKVGVFDSGLGGLTVLKSILKVLKNAEIFYIADTAYAPYGEKDSALILKRCEDITNYLLKEYKIDALIVACNTATSAAIKHLRDNFSSLIVIGTEPGIKPAILNTKSSNIGILATPSTLKSDKYQLLVNELSSIKKVNLFEQACPGLAMQIEKGEINTLTTYKMLEEWLIPMKEANVDTIVLGCTHYPLISQTIKKIMGEDITLIQTGDAIAKRLLSLSEEKGHKNIGDLKVTVLHTGLINLDMIENILENKNIEVRKCEI.

Substrate contacts are provided by residues 7–8 (DS) and 39–40 (YG). Cys-71 serves as the catalytic Proton donor/acceptor. Residue 72–73 (NT) coordinates substrate. Catalysis depends on Cys-184, which acts as the Proton donor/acceptor. A substrate-binding site is contributed by 185 to 186 (TH).

This sequence belongs to the aspartate/glutamate racemases family.

The catalysed reaction is L-glutamate = D-glutamate. Its pathway is cell wall biogenesis; peptidoglycan biosynthesis. Its function is as follows. Provides the (R)-glutamate required for cell wall biosynthesis. The polypeptide is Glutamate racemase (Aliarcobacter butzleri (strain RM4018) (Arcobacter butzleri)).